An 822-amino-acid polypeptide reads, in one-letter code: MPAPIRLRELIRTIRTARTQAEEREMIQKECAAIRSSFREEDNTYRCRNVAKLLYMHMLGYPAHFGQLECLKLIASQKFTDKRIGYLGAMLLLDERQDVHLLMTNCIKNDLNHSTQFVQGLALCTLGCMGSSEMCRDLAGEVEKLLKTSNSYLRKKAALCAVHVIRKVPELMEMFLPATKNLLNEKNHGVLHTSVVLLTEMCERSPDMLAHFRKLVPQLVRILKNLIMSGYSPEHDVSGISDPFLQVRILRLLRILGRNDDDSSEAMNDILAQVATNTETSKNVGNAILYETVLTIMDIKSESGLRVLAINILGRFLLNNDKNIRYVALTSLLKTVQTDHNAVQRHRSTIVDCLKDLDVSIKRRAMELSFALVNGNNIRGMMKELLYFLDSCEPEFKADCASGIFLAAEKYAPSKRWHIDTIMRVLTTAGSYVRDDAVPNLIQLITNSVEMHAYTVQRLYKAILGDYSQQPLVQVAAWCIGEYGDLLVSGQCEEEEPIQVTEDEVLDILESVLISNMSTSVTRGYALTAIMKLSTRFTCTVNRIKKVVSIYGSSIDVELQQRAVEYNALFKKYDHMRSALLERMPVMEKVTTNGPTEIVQTNGETEPAPLETKPPPSGPQPTSQANDLLDLLGGNDITPVIPTAPTSKPSSAGGELLDLLGDINLTGAPAAAPAPASVPQISQPPFLLDGLSSQPLFNDIAAGIPSITAYSKNGLKIEFTFERSNTNPSVTVITIQASNSTELDMTDFVFQAAVPKTFQLQLLSPSSSIVPAFNTGTITQVIKVLNPQKQQLRMRIKLTYNHKGSAMQDLAEVNNFPPQSWQ.

The disordered stretch occupies residues 597 to 628; it reads EIVQTNGETEPAPLETKPPPSGPQPTSQANDL. Residues 702–817 enclose the GAE domain; that stretch reads AGIPSITAYS…QDLAEVNNFP (116 aa).

This sequence belongs to the adaptor complexes large subunit family. As to quaternary structure, adaptor protein complex 1 (AP-1) is a heterotetramer composed of two large adaptins (gamma-type subunit AP1G1 and beta-type subunit AP1B1), a medium adaptin (mu-type subunit AP1M1 or AP1M2) and a small adaptin (sigma-type subunit AP1S1 or AP1S2 or AP1S3). Interacts (via GAE domain) with RABEP1. Interacts with SYNRG/gamma-synergin. Interacts with EPS15. Interacts (via GAE domain) with AP1AR (via coiled-coil domain). Interacts with CLN3 (via dileucine motif); this interaction facilitates lysosomal targeting. Interacts (via GAE domain) with AFTPH/aftiphilin; the interaction is required to recruit AFTPH/aftiphilin to the perinuclear region of the cell. Widely expressed.

The protein resides in the golgi apparatus. It is found in the cytoplasmic vesicle. Its subcellular location is the clathrin-coated vesicle membrane. The protein localises to the cytoplasm. It localises to the perinuclear region. The protein resides in the clathrin-coated vesicle. It is found in the membrane. Its subcellular location is the clathrin-coated pit. Subunit of clathrin-associated adaptor protein complex 1 that plays a role in protein sorting in the late-Golgi/trans-Golgi network (TGN) and/or endosomes. The AP complexes mediate both the recruitment of clathrin to membranes and the recognition of sorting signals within the cytosolic tails of transmembrane cargo molecules. In association with AFTPH/aftiphilin in the aftiphilin/p200/gamma-synergin complex, involved in the trafficking of transferrin from early to recycling endosomes, and the membrane trafficking of furin and the lysosomal enzyme cathepsin D between the trans-Golgi network (TGN) and endosomes. This is AP-1 complex subunit gamma-1 (AP1G1) from Homo sapiens (Human).